Here is a 510-residue protein sequence, read N- to C-terminus: Bifunctional pantoate ligase/cytidylate kinase (510 aa).

Residues 1–276 (MKKVIIRKTE…CGETRLIDHV (276 aa)) are pantoate--beta-alanine ligase. 29 to 36 (MGNLHDGH) is an ATP binding site. The active-site Proton donor is the histidine 36. Residue glutamine 61 participates in (R)-pantoate binding. Glutamine 61 is a beta-alanine binding site. Position 150-153 (150-153 (GEKD)) interacts with ATP. Glutamine 156 contacts (R)-pantoate. 187 to 190 (LSSR) provides a ligand contact to ATP. The tract at residues 277-510 (FLMKRRPIIA…DRIPKETEIK (234 aa)) is cytidylate kinase.

In the N-terminal section; belongs to the pantothenate synthetase family. The protein in the C-terminal section; belongs to the cytidylate kinase family. Type 1 subfamily.

It localises to the cytoplasm. The enzyme catalyses (R)-pantoate + beta-alanine + ATP = (R)-pantothenate + AMP + diphosphate + H(+). It catalyses the reaction CMP + ATP = CDP + ADP. It carries out the reaction dCMP + ATP = dCDP + ADP. The protein operates within cofactor biosynthesis; (R)-pantothenate biosynthesis; (R)-pantothenate from (R)-pantoate and beta-alanine: step 1/1. Its function is as follows. Catalyzes the condensation of pantoate with beta-alanine in an ATP-dependent reaction via a pantoyl-adenylate intermediate. Functionally, catalyzes the transfer of a phosphate group from ATP to either CMP or dCMP to form CDP or dCDP and ADP, respectively. This is Bifunctional pantoate ligase/cytidylate kinase from Prochlorococcus marinus (strain MIT 9301).